Consider the following 145-residue polypeptide: UPF0735 ACT domain-containing protein CLH_2637 (145 aa).

The 76-residue stretch at 69-144 (TFNLIVKDQT…YVEKIEFVAM (76 aa)) folds into the ACT domain.

It belongs to the UPF0735 family.

In Clostridium botulinum (strain Alaska E43 / Type E3), this protein is UPF0735 ACT domain-containing protein CLH_2637.